We begin with the raw amino-acid sequence, 286 residues long: MPGVQDRVIVVTGAGGGLGREYALTLAGEGASVVVNDLGGARDGTGAGSAMADEVVAEIRDKGGRAVANYDSVATEDGAANIIKTALDEFGAVHGVVSNAGILRDGTFHKMSFENWDAVLKVHLYGGYHVLRAAWPHFREQSYGRVVVATSTSGLFGNFGQTNYGAAKLGLVGLINTLALEGAKYNIHANALAPIAATRMTQDILPPEVLEKLTPEFVAPVVAYLCTEECADNASVYVVGGGKVQRVALFGNDGANFDKPPSVQDVAARWAEITDLSGAKIAGFKL.

NAD(+) is bound at residue 11 to 35 (VTGAGGGLGREYALTLAGEGASVVV). Residue Ser151 coordinates substrate. Tyr164 acts as the Proton acceptor in catalysis. Residue Lys280 forms an Isoglutamyl lysine isopeptide (Lys-Gln) (interchain with Q-Cter in protein Pup) linkage.

It belongs to the short-chain dehydrogenases/reductases (SDR) family. In terms of processing, pupylated at Lys-280 by the prokaryotic ubiquitin-like protein Pup, which probably leads to its degradation by the proteasome.

The polypeptide is Putative short-chain type dehydrogenase/reductase Rv0148 (Mycobacterium tuberculosis (strain ATCC 25618 / H37Rv)).